The chain runs to 716 residues: Polyribonucleotide nucleotidyltransferase (716 aa).

Residues Asp-493 and Asp-499 each coordinate Mg(2+). The KH domain maps to 560-619 (PRMITIKINPEKIRDVIGKGGSVIRALTEETGTTIDISDDGVVTIASTSSEGMAEAKKRI). The region spanning 629-697 (GQVYEGTVLK…EKGRVRLSAK (69 aa)) is the S1 motif domain.

The protein belongs to the polyribonucleotide nucleotidyltransferase family. The cofactor is Mg(2+).

The protein resides in the cytoplasm. The enzyme catalyses RNA(n+1) + phosphate = RNA(n) + a ribonucleoside 5'-diphosphate. Functionally, involved in mRNA degradation. Catalyzes the phosphorolysis of single-stranded polyribonucleotides processively in the 3'- to 5'-direction. The chain is Polyribonucleotide nucleotidyltransferase from Paraburkholderia xenovorans (strain LB400).